The following is a 392-amino-acid chain: Putative F-box protein At1g71320 (392 aa).

In terms of domain architecture, F-box spans 8-55; the sequence is NPKTIFIPDDIAEGIFHHLPIKSLARFKVLSKKWTSMIESTYFSHKRL.

This chain is Putative F-box protein At1g71320, found in Arabidopsis thaliana (Mouse-ear cress).